Here is a 1006-residue protein sequence, read N- to C-terminus: MKLLSVCAVALLAAQAAGASIKHKLNGFTIMEHSDPAKRELLQKYVTWDEKSLFVNGERIMIFSGEVHPFRLPVPSLWLDVFQKIKALGFNCVSFYVDWALLEGKPGKYRAEGNFALEPFFDAAKQAGIYLLARPGPYINAEASGGGFPGWLQRVNGTLRTSDPAYLKATDNYIAHVAATVAKGQITNGGPVILYQPENEYSGACCNATFPDGDYMQYVIDQARNAGIVVPLINNDAWTGGHNAPGTGKGEVDIYGHDSYPLGFDCGHPSVWPKGNLPTTFRTDHLRESPTTPYSLIEFQAGSFDPWGGPGFAACAALVNHEFERVFYKNDLSFGAAILNLYMTFGGTNWGNLGHPGGYTSYDYGSPLTESRNVTREKYSELKLIGNFVKASPSYLLATPGNLTTSGYADTADLTVTPLLGNGTGSYFVVRHTDYTSQASTPYKLSLPTSAGRLTVPQLGGTLTLNGRDSKVHVVDYNVAGTNILYSTAEVFTWKKFGDSKVLVLYGGPGEHHELAVSLKSDVQVVEGSNSEFTSKKVEDVVVVAWDVSASRRIVQIGDLKIFLLDRNSAYNYWVPQLDKDDSSTGYSSEKTTASSIIVKAGYLVRTAYTKGSGLYLTADFNATTPVEVIGAPSNVRNLYINGEKTQFKTDKNGIWSTGVKYSAPKIKLPSMKDLDWKYLDTLPEVQSTYDDSAWPAADLDTTPNTLRPLTMPKSLHSSDYGFHTGYLIYRGHFVADGSETTFDVRTQGGSAFGSSVWLNEAFLGSWTGLNANADYNSTYRLPQVEKGKNYVLTVVIDTMGLNENWVVGTDEMKNPRGILSYKLSGRDASAITWKLTGNLGGEDYQDKIRGPLNEGGLYAERQGFHQPEPPSKKWKSASPLDGLSKPGIGFYTAQFDLDIPSGWDVPLYFNFGNSTKSAYRVQLYVNGYQYGKFVSNIGPQTSFPVPQGILNYQGTNWVALTLWALESDGAKLDDFELVNTTPVMTALSKIRPSKQPNYRQRKGAY.

Residues 1 to 18 (MKLLSVCAVALLAAQAAG) form the signal peptide. Substrate contacts are provided by Tyr-96, Asn-140, Ala-141, and Glu-142. Asn-156 is a glycosylation site (N-linked (GlcNAc...) asparagine). Position 199 (Asn-199) interacts with substrate. Glu-200 serves as the catalytic Proton donor. A disulfide bond links Cys-205 and Cys-206. A glycan (N-linked (GlcNAc...) asparagine) is linked at Asn-207. Tyr-260 is a substrate binding site. A disulfide bridge links Cys-266 with Cys-315. The active-site Nucleophile is the Glu-298. Tyr-364 is a binding site for substrate. N-linked (GlcNAc...) asparagine glycosylation is found at Asn-373, Asn-402, Asn-422, Asn-622, Asn-777, and Asn-914.

This sequence belongs to the glycosyl hydrolase 35 family.

The protein resides in the secreted. The catalysed reaction is Hydrolysis of terminal non-reducing beta-D-galactose residues in beta-D-galactosides.. In terms of biological role, cleaves beta-linked terminal galactosyl residues from gangliosides, glycoproteins, and glycosaminoglycans. The polypeptide is Probable beta-galactosidase A (lacA) (Neosartorya fischeri (strain ATCC 1020 / DSM 3700 / CBS 544.65 / FGSC A1164 / JCM 1740 / NRRL 181 / WB 181) (Aspergillus fischerianus)).